Here is an 808-residue protein sequence, read N- to C-terminus: Protein NLP5 (808 aa).

The span at 56–68 (PTQDTSNSLSQMY) shows a compositional bias: polar residues. The segment at 56 to 83 (PTQDTSNSLSQMYGQDCPERSSLEDQNQ) is disordered. An RWP-RK domain is found at 536–617 (NRVTEKKRTK…IDSVEGVSGH (82 aa)). The interval 660–680 (SPGSSCSHSSSCSSETQVIKE) is disordered. Residues 663–673 (SSCSHSSSCSS) show a composition bias toward low complexity. The 84-residue stretch at 710–793 (FLRVKVSYEE…QTIKLLLQLS (84 aa)) folds into the PB1 domain.

Its subcellular location is the nucleus. Functionally, probable transcription factor. This Arabidopsis thaliana (Mouse-ear cress) protein is Protein NLP5 (NLP5).